The sequence spans 248 residues: Agamous-like MADS-box protein AGL1 (248 aa).

In terms of domain architecture, MADS-box spans 18-72; that stretch reads RGKIEIKRIENTTNRQVTFCKRRNGLLKKAYELSVLCDAEVALVIFSTRGRLYEY. A K-box domain is found at 102 to 192; that stretch reads TQYYQQEASK…RAKIAEGARL (91 aa).

As to quaternary structure, interacts with AGL15 and AGL16.

The protein resides in the nucleus. Probable transcription factor. Interacts genetically with TT16/AGL32 in a partially antagonistic manner during flower development. Is essential for the coordination of cell divisions in ovule, seed coat development and endosperm formation. This chain is Agamous-like MADS-box protein AGL1 (AGL1), found in Arabidopsis thaliana (Mouse-ear cress).